A 294-amino-acid polypeptide reads, in one-letter code: Aquaporin-B (294 aa).

Residues 1 to 31 are disordered; the sequence is MSLKRSDDYQDLEEGIAMEDGGNIKDEEEKP. At 1-42 the chain is on the cytoplasmic side; that stretch reads MSLKRSDDYQDLEEGIAMEDGGNIKDEEEKPLDPIEEQNKKR. Residues 22–31 are compositionally biased toward basic and acidic residues; it reads GNIKDEEEKP. Residues 43-63 form a helical membrane-spanning segment; that stretch reads WVLIRAVLGELLCTFLFVYVL. Over 64–79 the chain is Extracellular; it reads CATSANFIRLGSPPNP. S75 is a glycosylation site (O-linked (GalNAc...) serine). A helical transmembrane segment spans residues 80–100; it reads VVGGLSTGFAAVALIYSFADV. The Cytoplasmic portion of the chain corresponds to 101 to 123; it reads SGAHFNPAVTFATCVTRKTSITK. An NPA 1 motif is present at residues 106–108; the sequence is NPA. A helical transmembrane segment spans residues 124 to 144; the sequence is GLMYVGAQLVGSVLASLILLA. Residues 145–172 are Extracellular-facing; that stretch reads TFPGNFPGDKNAASAVAIAPSTDANIGN. Residues 173–193 traverse the membrane as a helical segment; the sequence is AFLTELVLTFILVYVIFAVAF. The Cytoplasmic portion of the chain corresponds to 194–224; that stretch reads DTVDNSVKTKVVGKSSSNNLTIYTTSGQTKA. Positions 208–219 are required for water permeability; that stretch reads SSSNNLTIYTTS. The chain crosses the membrane as a helical span at residues 225–245; it reads GFAPIAIGFTLGFLCFLGGSV. The Extracellular portion of the chain corresponds to 246–268; the sequence is SGGAFNPARVFGTALVGNNWTRH. The NPA 2 signature appears at 251–253; that stretch reads NPA. Residues 269–289 form a helical membrane-spanning segment; that stretch reads WMYWIADFLGAGLAGFAQKFF. The Cytoplasmic segment spans residues 290 to 294; that stretch reads SSTHK.

This sequence belongs to the MIP/aquaporin (TC 1.A.8) family. Glycosylated and non-glycosylated forms exist throughout all developmental stages.

The protein resides in the cell membrane. Its subcellular location is the cytoplasmic vesicle. Functionally, putatively gated water-specific channel, requiring a cysteine residue within the channel. Impermeable to water, glycerol and urea when expressed in Xenopus oocytes. Not regulated by pH; channels remain impermeable to water at pH 7.4 and 5.2. The sequence is that of Aquaporin-B from Dictyostelium discoideum (Social amoeba).